A 229-amino-acid polypeptide reads, in one-letter code: MLVCIPEILSKHEVTEFRRLMDQADWEDGRSTAGAQSAMVKRNEQLPPDSELARMLGRRIVSALTANPKFVSAAVPLQIFPPLFNRYAASGNHHFGIHVDNAVRGDPLTGLRIRTDLSVTLFLAEPDEYDGGELVVEDTYGSHEVKLPAGDCVLYPSSSLHMVTPVTRGARVASFFWLQSMIRDAHARSMIYDLDGAIQALVERLGRDDPETVKLTGIYHNLIRYWADV.

Positions 78 to 180 constitute a Fe2OG dioxygenase domain; sequence QIFPPLFNRY…RVASFFWLQS (103 aa). Fe cation contacts are provided by histidine 98, aspartate 100, and histidine 161. Arginine 171 contacts 2-oxoglutarate.

Fe(2+) serves as cofactor. L-ascorbate is required as a cofactor.

This is PKHD-type hydroxylase RPD_3334 from Rhodopseudomonas palustris (strain BisB5).